We begin with the raw amino-acid sequence, 408 residues long: UDP-N-acetylglucosamine--dolichyl-phosphate N-acetylglucosaminephosphotransferase (408 aa).

Transmembrane regions (helical) follow at residues 6–26 (SLLG…IYLP) and 32–52 (WIIV…YKLI). Residues D68 and E84 each contribute to the UDP-N-acetyl-alpha-D-glucosamine site. Transmembrane regions (helical) follow at residues 87-107 (GICV…FQWF) and 120-140 (AALT…VLNL). Dolichyl phosphate is bound at residue K145. A run of 2 helical transmembrane segments spans residues 147–167 (ILPM…TTVV) and 181–201 (LGVV…LAIF). A dolichyl phosphate-binding site is contributed by 200–208 (IFCTNSINI). Mg(2+) is bound at residue N207. N213 contributes to the UDP-N-acetyl-alpha-D-glucosamine binding site. The next 2 helical transmembrane spans lie at 221–241 (VVIA…ASSV) and 258–278 (HLFS…LLFY). D289 lines the Mg(2+) pocket. A helical transmembrane segment spans residues 297–317 (MCFAVVAILCHFSKTLLLFFI). A UDP-N-acetyl-alpha-D-glucosamine-binding site is contributed by 338–340 (RHR). Helical transmembrane passes span 351–371 (MEAI…TGPL) and 376–396 (LCVY…GIRY).

This sequence belongs to the glycosyltransferase 4 family. As to quaternary structure, homodimer. Mg(2+) serves as cofactor.

Its subcellular location is the endoplasmic reticulum membrane. It catalyses the reaction a di-trans,poly-cis-dolichyl phosphate + UDP-N-acetyl-alpha-D-glucosamine = an N-acetyl-alpha-D-glucosaminyl-diphospho-di-trans,poly-cis-dolichol + UMP. It functions in the pathway protein modification; protein glycosylation. Inhibited by natural nucleoside antibiotic tunicamycin, which acts as a structural analog and competitor of UDP-GlcNAc. UDP-N-acetylglucosamine--dolichyl-phosphate N-acetylglucosaminephosphotransferase that operates in the biosynthetic pathway of dolichol-linked oligosaccharides, the glycan precursors employed in protein asparagine (N)-glycosylation. The assembly of dolichol-linked oligosaccharides begins on the cytosolic side of the endoplasmic reticulum membrane and finishes in its lumen. The sequential addition of sugars to dolichol pyrophosphate produces dolichol-linked oligosaccharides containing fourteen sugars, including two GlcNAcs, nine mannoses and three glucoses. Once assembled, the oligosaccharide is transferred from the lipid to nascent proteins by oligosaccharyltransferases. Catalyzes the initial step of dolichol-linked oligosaccharide biosynthesis, transfering GlcNAc-1-P from cytosolic UDP-GlcNAc onto the carrier lipid dolichyl phosphate (P-dolichol), yielding GlcNAc-P-P-dolichol embedded in the cytoplasmic leaflet of the endoplasmic reticulum membrane. The chain is UDP-N-acetylglucosamine--dolichyl-phosphate N-acetylglucosaminephosphotransferase (alg7) from Dictyostelium discoideum (Social amoeba).